The following is a 305-amino-acid chain: UDP-N-acetylenolpyruvoylglucosamine reductase (305 aa).

Positions 37 to 202 (GIGGPARFLA…LSVTFNLEPK (166 aa)) constitute an FAD-binding PCMH-type domain. The active site involves Arg183.

It belongs to the MurB family. FAD serves as cofactor.

It localises to the cytoplasm. The catalysed reaction is UDP-N-acetyl-alpha-D-muramate + NADP(+) = UDP-N-acetyl-3-O-(1-carboxyvinyl)-alpha-D-glucosamine + NADPH + H(+). Its pathway is cell wall biogenesis; peptidoglycan biosynthesis. Cell wall formation. The polypeptide is UDP-N-acetylenolpyruvoylglucosamine reductase (Rhodopirellula baltica (strain DSM 10527 / NCIMB 13988 / SH1)).